A 213-amino-acid polypeptide reads, in one-letter code: UPF0301 protein RPC_0788 (213 aa).

Positions Met1 to Ser20 are disordered.

Belongs to the UPF0301 (AlgH) family.

This chain is UPF0301 protein RPC_0788, found in Rhodopseudomonas palustris (strain BisB18).